Here is a 394-residue protein sequence, read N- to C-terminus: S-adenosylmethionine synthase 3 (394 aa).

A Mg(2+)-binding site is contributed by Glu-11. Residue His-17 coordinates ATP. Glu-45 provides a ligand contact to K(+). Glu-58 and Gln-101 together coordinate L-methionine. ATP contacts are provided by residues 169–171, 237–240, Asp-248, 254–255, Ala-271, Lys-275, and Lys-279; these read DGK, SGRF, and RK. L-methionine is bound at residue Asp-248. Lys-279 serves as a coordination point for L-methionine.

Belongs to the AdoMet synthase family. Homotetramer. Mn(2+) is required as a cofactor. It depends on Mg(2+) as a cofactor. The cofactor is Co(2+). Requires K(+) as cofactor.

The protein resides in the cytoplasm. It carries out the reaction L-methionine + ATP + H2O = S-adenosyl-L-methionine + phosphate + diphosphate. It functions in the pathway amino-acid biosynthesis; S-adenosyl-L-methionine biosynthesis; S-adenosyl-L-methionine from L-methionine: step 1/1. Functionally, catalyzes the formation of S-adenosylmethionine from methionine and ATP. The reaction comprises two steps that are both catalyzed by the same enzyme: formation of S-adenosylmethionine (AdoMet) and triphosphate, and subsequent hydrolysis of the triphosphate. The protein is S-adenosylmethionine synthase 3 (SAM3) of Hordeum vulgare (Barley).